The following is a 1149-amino-acid chain: ATP-dependent helicase/deoxyribonuclease subunit B (1149 aa).

8–15 (GRAGTGKT) provides a ligand contact to ATP. 4 residues coordinate [4Fe-4S] cluster: cysteine 784, cysteine 1102, cysteine 1105, and cysteine 1111.

Belongs to the helicase family. AddB/RexB type 1 subfamily. Heterodimer of AddA and AddB. The cofactor is Mg(2+). [4Fe-4S] cluster serves as cofactor.

The heterodimer acts as both an ATP-dependent DNA helicase and an ATP-dependent, dual-direction single-stranded exonuclease. Recognizes the chi site generating a DNA molecule suitable for the initiation of homologous recombination. The AddB subunit has 5' -&gt; 3' nuclease activity but not helicase activity. The protein is ATP-dependent helicase/deoxyribonuclease subunit B of Thermoanaerobacter pseudethanolicus (strain ATCC 33223 / 39E) (Clostridium thermohydrosulfuricum).